A 131-amino-acid polypeptide reads, in one-letter code: Small ribosomal subunit protein eS8 (131 aa).

The tract at residues 1 to 42 (MKLGAYYKGGDLKKPSGGKKRKVRKTKKKALGGGPPQIPKLG) is disordered. Over residues 16 to 30 (SGGKKRKVRKTKKKA) the composition is skewed to basic residues.

This sequence belongs to the eukaryotic ribosomal protein eS8 family. In terms of assembly, part of the 30S ribosomal subunit.

This chain is Small ribosomal subunit protein eS8, found in Pyrobaculum aerophilum (strain ATCC 51768 / DSM 7523 / JCM 9630 / CIP 104966 / NBRC 100827 / IM2).